The primary structure comprises 133 residues: uncharacterized protein (133 aa).

This is an uncharacterized protein from Methanothermobacter marburgensis (strain ATCC BAA-927 / DSM 2133 / JCM 14651 / NBRC 100331 / OCM 82 / Marburg) (Methanobacterium thermoautotrophicum).